Here is a 56-residue protein sequence, read N- to C-terminus: Ovomucoid (56 aa).

In terms of domain architecture, Kazal-like spans 6–56; that stretch reads VDCSDHPKPACLQEQKPICGSDNKTYDNKCSFCNAVVDSNGTLTLSHFGKC. Disulfide bonds link Cys8-Cys38, Cys16-Cys35, and Cys24-Cys56. Asn45 is a glycosylation site (N-linked (GlcNAc...) asparagine).

The protein resides in the secreted. This is Ovomucoid from Ortalis vetula (Plain chachalaca).